A 509-amino-acid polypeptide reads, in one-letter code: tRNA-2-methylthio-N(6)-dimethylallyladenosine synthase (509 aa).

The interval 1 to 21 (MNEKQRIESGQVNPSDKKSEK) is disordered. Residues 66–184 (RKFYIRTYGC…LPELLSEAYL (119 aa)) enclose the MTTase N-terminal domain. [4Fe-4S] cluster-binding residues include C75, C111, C145, C221, C225, and C228. The Radical SAM core domain maps to 207-437 (RTGKIKGWVN…NEVVNEISAK (231 aa)). The 64-residue stretch at 440 to 503 (KEYEGQVVEV…TWSLDGEMVG (64 aa)) folds into the TRAM domain.

This sequence belongs to the methylthiotransferase family. MiaB subfamily. In terms of assembly, monomer. [4Fe-4S] cluster serves as cofactor.

The protein resides in the cytoplasm. It catalyses the reaction N(6)-dimethylallyladenosine(37) in tRNA + (sulfur carrier)-SH + AH2 + 2 S-adenosyl-L-methionine = 2-methylsulfanyl-N(6)-dimethylallyladenosine(37) in tRNA + (sulfur carrier)-H + 5'-deoxyadenosine + L-methionine + A + S-adenosyl-L-homocysteine + 2 H(+). Functionally, catalyzes the methylthiolation of N6-(dimethylallyl)adenosine (i(6)A), leading to the formation of 2-methylthio-N6-(dimethylallyl)adenosine (ms(2)i(6)A) at position 37 in tRNAs that read codons beginning with uridine. This chain is tRNA-2-methylthio-N(6)-dimethylallyladenosine synthase, found in Bacillus licheniformis (strain ATCC 14580 / DSM 13 / JCM 2505 / CCUG 7422 / NBRC 12200 / NCIMB 9375 / NCTC 10341 / NRRL NRS-1264 / Gibson 46).